A 167-amino-acid chain; its full sequence is Protein tyrosine phosphatase type IVA 2 (167 aa).

The Tyrosine-protein phosphatase domain maps to 5-158; the sequence is APVEISYENM…YRPKMRLRFR (154 aa). Cysteines 46 and 101 form a disulfide. D69 serves as the catalytic Proton donor. Residue C101 is the Phosphocysteine intermediate of the active site. Position 102–107 (102–107) interacts with phosphate; it reads VAGLGR. Position 107 (R107) interacts with substrate. C164 is modified (cysteine methyl ester). Residue C164 is the site of S-farnesyl cysteine attachment. Positions 165–167 are cleaved as a propeptide — removed in mature form; it reads CVQ.

Belongs to the protein-tyrosine phosphatase family. As to quaternary structure, in contrast to PTP4A1 and PTP4A3, does not interact with tubulin. Interacts with RABGGTB. In terms of processing, farnesylated. Farnesylation is required for membrane targeting and for interaction with RABGGTB. Expressed in skeletal muscle, and at lower levels in liver, lung, heart, kidney, brain, testis and spleen.

The protein resides in the cell membrane. Its subcellular location is the early endosome. It is found in the cytoplasm. It carries out the reaction O-phospho-L-tyrosyl-[protein] + H2O = L-tyrosyl-[protein] + phosphate. With respect to regulation, inhibited by sodium orthovanadate and pentamidine. Functionally, protein tyrosine phosphatase which stimulates progression from G1 into S phase during mitosis. Inhibits geranylgeranyl transferase type II activity by blocking the association between RABGGTA and RABGGTB. The sequence is that of Protein tyrosine phosphatase type IVA 2 (Ptp4a2) from Mus musculus (Mouse).